The primary structure comprises 579 residues: MGTAKLPALLWLLAGVVLALAVNPAHGAKTRHYDFFITETNYTRLCHEKSILTVNGQFPGPTIYARKGDLVIVNVHNNGNKNITIHWHGVDQPRNPWSDGPEFITQCPIRPGGNFTYQVILSEEEGTLWWHAHSDFDRATVHGAIVIHPKRGTTFPFKKPDKEIPVILGEWWNDDIEHVLDKAQLLGGDVDPSNANTINAQPGDMFPCSRDDTFKVAVQQGNTYLLRIINAGLTNDMFFAIAGHRLTVVGIDARYTKPLTVDYIMIAPGQTMDVLLEAKRTLGSNSRYYMAARTFITLPLDTIPFNNSTATAIVEYTDSVTARPVGPPEFPVQLPAIKDENAAMAFVTQLRSLGNQEHPVHVPTHVDEHMLIDIDINVLPCDPTNMAEKCKEGPQGNRFAASLNNVSFQSPAIDVLDAYYYSSGHGVYEEDFPNKPTAFVDPPVNNGSGPLMTKRGTKVKVLEYGTVVEVVFHDLSSENHPMHLHGFAFYVVGRGNGTFDESRDPATYNLVDPPFQNTVSVPRSGWAAIRFRADNPGVWFMHCHFDRHVVWGMDTVFIVKDGKTPQAQMLPRPPNMPQC.

An N-terminal signal peptide occupies residues 1–27 (MGTAKLPALLWLLAGVVLALAVNPAHG). 2 consecutive Plastocyanin-like domains span residues 36-152 (FITE…PKRG) and 162-319 (KEIP…YTDS). N-linked (GlcNAc...) asparagine glycosylation is found at Asn41 and Asn82. Positions 86 and 88 each coordinate Cu cation. Residue Asn114 is glycosylated (N-linked (GlcNAc...) asparagine). 2 residues coordinate Cu cation: His131 and His133. N-linked (GlcNAc...) asparagine glycans are attached at residues Asn307, Asn405, and Asn446. The region spanning 436-563 (PTAFVDPPVN…DTVFIVKDGK (128 aa)) is the Plastocyanin-like 3 domain. His480, His483, and His485 together coordinate Cu cation. N-linked (GlcNAc...) asparagine glycosylation is present at Asn496. 5 residues coordinate Cu cation: His542, Cys543, His544, His548, and Met553.

Belongs to the multicopper oxidase family. Cu cation is required as a cofactor.

Its subcellular location is the secreted. It localises to the extracellular space. It is found in the apoplast. The enzyme catalyses 4 hydroquinone + O2 = 4 benzosemiquinone + 2 H2O. Its function is as follows. Lignin degradation and detoxification of lignin-derived products. In Oryza sativa subsp. japonica (Rice), this protein is Putative laccase-9 (LAC9).